A 570-amino-acid polypeptide reads, in one-letter code: Phosphoglucomutase 1 (570 aa).

N-acetylserine is present on S2. Alpha-D-glucose 1,6-bisphosphate is bound by residues R24 and S120. S120 serves as the catalytic Phosphoserine intermediate. Residues S120, D291, D293, and D295 each coordinate Mg(2+). The residue at position 120 (S120) is a Phosphoserine. Positions 295, 296, 360, 379, 381, and 392 each coordinate alpha-D-glucose 1,6-bisphosphate.

This sequence belongs to the phosphohexose mutase family. As to quaternary structure, monomer. It depends on Mg(2+) as a cofactor.

The protein resides in the cytoplasm. The enzyme catalyses alpha-D-glucose 1-phosphate = alpha-D-glucose 6-phosphate. The catalysed reaction is O-phospho-L-seryl-[protein] + alpha-D-glucose 1-phosphate = alpha-D-glucose 1,6-bisphosphate + L-seryl-[protein]. It catalyses the reaction alpha-D-glucose 1,6-bisphosphate + L-seryl-[protein] = O-phospho-L-seryl-[protein] + alpha-D-glucose 6-phosphate. Minor phosphoglucomutase isozyme that catalyzes the reversible interconversion of alpha-D-glucose 1-phosphate and alpha-D-glucose 6-phosphate. The mechanism proceeds via the intermediate compound alpha-D-glucose 1,6-bisphosphate. Constitutes about 10-20% of the phosphoglucomutase activity in the cell. Key enzyme in hexose metabolism. The forward reaction is an essential step in the energy metabolism of galactose since the product of the galactose pathway enzymes in yeast is glucose 1-phosphate. The reverse reaction is an essential step for biosynthesis when carbon sources other than galactose are the energy source because glucose 1-phosphate is the starting point for the synthesis of UDP-glucose, which acts as a precursor for the synthesis of oligosaccharides and trehalose. In Saccharomyces cerevisiae (strain ATCC 204508 / S288c) (Baker's yeast), this protein is Phosphoglucomutase 1.